The sequence spans 224 residues: Protein FAM3D (224 aa).

A signal peptide spans 1-25; that stretch reads MRVSGVLRLLALIFAIVTTWMFIRS. Cystine bridges form between Cys-55-Cys-83 and Cys-61-Cys-218. Residues 64–222 enclose the GG-type lectin domain; it reads NYFAFKICSG…LEMEGCMPPK (159 aa). The N-linked (GlcNAc...) asparagine glycan is linked to Asn-107.

This sequence belongs to the FAM3 family. In terms of tissue distribution, abundantly expressed in placenta and weakly expressed in small intestine.

Its subcellular location is the secreted. The chain is Protein FAM3D (FAM3D) from Homo sapiens (Human).